A 327-amino-acid chain; its full sequence is MEGSNGFGIDSILSHRAGSPALPKGDPLLGDCRSPLELSPRSESSSDCSSPASPGRDCLETSTSRPGAASGPGLDSHLQPGQLSAPAQSRTVTSSFLIRDILADCKPLAACAPYSSSGQPAAPEPGGRLAAKAGEDFRDKLDKSVSSASSDSEYKVKEEGDREISSSRDSPPVRLKKPRKARTAFTDHQLAQLERSFERQKYLSVQDRMELAASLNLTDTQVKTWYQNRRTKWKRQTAVGLELLAEAGNYSALQRMFPSPYFYPQSLVSNLDPGAALYLYRGPSAPPPALQRPLVPRILIHGLQGASEPPPPLPPLPGVLPRAAQPR.

Disordered regions lie at residues 1–90 (MEGS…AQSR), 113–181 (PYSS…PRKA), and 303–327 (LQGA…AQPR). Over residues 33–54 (RSPLELSPRSESSSDCSSPASP) the composition is skewed to low complexity. The segment covering 79 to 90 (QPGQLSAPAQSR) has biased composition (polar residues). Basic and acidic residues-rich tracts occupy residues 133 to 143 (AGEDFRDKLDK) and 152 to 166 (SEYK…EISS). The homeobox DNA-binding region spans 178–237 (PRKARTAFTDHQLAQLERSFERQKYLSVQDRMELAASLNLTDTQVKTWYQNRRTKWKRQT). The span at 308-318 (EPPPPLPPLPG) shows a compositional bias: pro residues.

Belongs to the BAR homeobox family.

The protein localises to the nucleus. The chain is BarH-like 1 homeobox protein (Barhl1) from Mus musculus (Mouse).